The following is an 88-amino-acid chain: Exodeoxyribonuclease 7 small subunit (88 aa).

The protein belongs to the XseB family. Heterooligomer composed of large and small subunits.

Its subcellular location is the cytoplasm. It carries out the reaction Exonucleolytic cleavage in either 5'- to 3'- or 3'- to 5'-direction to yield nucleoside 5'-phosphates.. In terms of biological role, bidirectionally degrades single-stranded DNA into large acid-insoluble oligonucleotides, which are then degraded further into small acid-soluble oligonucleotides. The sequence is that of Exodeoxyribonuclease 7 small subunit from Tolumonas auensis (strain DSM 9187 / NBRC 110442 / TA 4).